We begin with the raw amino-acid sequence, 239 residues long: 7-cyano-7-deazaguanine synthase (239 aa).

13-23 serves as a coordination point for ATP; the sequence is LSGGQDSATCL. Residues Cys199, Cys214, Cys217, and Cys220 each contribute to the Zn(2+) site.

The protein belongs to the QueC family. Zn(2+) serves as cofactor.

The catalysed reaction is 7-carboxy-7-deazaguanine + NH4(+) + ATP = 7-cyano-7-deazaguanine + ADP + phosphate + H2O + H(+). It functions in the pathway purine metabolism; 7-cyano-7-deazaguanine biosynthesis. Catalyzes the ATP-dependent conversion of 7-carboxy-7-deazaguanine (CDG) to 7-cyano-7-deazaguanine (preQ(0)). The sequence is that of 7-cyano-7-deazaguanine synthase from Acidovorax ebreus (strain TPSY) (Diaphorobacter sp. (strain TPSY)).